We begin with the raw amino-acid sequence, 570 residues long: Urease subunit alpha 1 (570 aa).

The 440-residue stretch at 131-570 (GGIDTHVHFI…VPMAQRYFLF (440 aa)) folds into the Urease domain. Ni(2+) contacts are provided by His136, His138, and Lys219. At Lys219 the chain carries N6-carboxylysine. His221 is a binding site for substrate. The Ni(2+) site is built by His248 and His274. The active-site Proton donor is the His322. Asp362 contributes to the Ni(2+) binding site.

Belongs to the metallo-dependent hydrolases superfamily. Urease alpha subunit family. As to quaternary structure, heterotrimer of UreA (gamma), UreB (beta) and UreC (alpha) subunits. Three heterotrimers associate to form the active enzyme. Requires Ni cation as cofactor. Post-translationally, carboxylation allows a single lysine to coordinate two nickel ions.

The protein resides in the cytoplasm. The catalysed reaction is urea + 2 H2O + H(+) = hydrogencarbonate + 2 NH4(+). Its pathway is nitrogen metabolism; urea degradation; CO(2) and NH(3) from urea (urease route): step 1/1. Functionally, may protect brucellae during their passage through the stomach. The major route of infection in human brucellosis is oral. The polypeptide is Urease subunit alpha 1 (Brucella abortus (strain 2308)).